Consider the following 382-residue polypeptide: Fetuin-B (382 aa).

Positions 1–15 (MGLLLPLALCILVLC) are cleaved as a signal peptide. Cystatin fetuin-B-type domains follow at residues 25-138 (ALNP…YNCT) and 149-255 (MTCP…VTCD). Asparagine 37 carries an N-linked (GlcNAc...) asparagine glycan. Intrachain disulfides connect cysteine 93–cysteine 104, cysteine 117–cysteine 137, and cysteine 151–cysteine 154. Residue asparagine 136 is glycosylated (N-linked (GlcNAc...) asparagine). N-linked (GlcNAc...) asparagine glycosylation is present at asparagine 182. 2 disulfide bridges follow: cysteine 216–cysteine 224 and cysteine 237–cysteine 254. Polar residues-rich tracts occupy residues 262 to 276 (PATG…QKPT) and 286 to 295 (QKNTPPTDSP). Disordered stretches follow at residues 262 to 320 (PATG…EKGP) and 363 to 382 (ARTA…VLPP). 2 O-linked (GalNAc...) threonine glycosylation sites follow: threonine 289 and threonine 292. Positions 310–320 (LDDKNSQEKGP) are enriched in basic and acidic residues. At serine 315 the chain carries Phosphoserine.

It belongs to the fetuin family. As to expression, liver and testis.

Its subcellular location is the secreted. Functionally, protease inhibitor required for egg fertilization. Required to prevent premature zona pellucida hardening before fertilization, probably by inhibiting the protease activity of ASTL, a protease that mediates the cleavage of ZP2 and triggers zona pellucida hardening. In Homo sapiens (Human), this protein is Fetuin-B (FETUB).